Consider the following 413-residue polypeptide: MTICQFFLQGRCRFGDRCWNEHPRGGGGRPHSAGPVRGAGGGWGAASQRYANVIQPPIFKHSTWGGSGDGGGFSGASDFGSPGNKSAVFSQNRFSALSSAHPADGFSDEEQRLLDCVAKDMATWESSGQWMFSCYSPEAGKPNVSGFREFSAEEVRLEYYNCSANNNTENYINSVNQLVQERRNRLQELKALNASGKESLLSQLKNAVTQPLPSLGFGGQQASSFGFPSFPVSSSSGAASFSFKANPSVPPGNAAAVGSSAAASNPPTFGVTSSPSVPNPVGSGNSSAPSAASFSFKTSGTTSGCGTSGLSGFGSSAAANSSSTAPLPVSATPSAATGTSQSGASSASAAQTAGASGHNVTSAPSAVPNGIASDKLYTPRSELTAEELEQFEAKRFTLGKIPLKPPPIDLLYL.

The C3H1-type zinc-finger motif lies at 1–25; that stretch reads MTICQFFLQGRCRFGDRCWNEHPRG. FG repeat units lie at residues 14-15, 79-80, 217-218, 225-226, 269-270, and 313-314; these read FG. The tract at residues 252 to 293 is disordered; the sequence is GNAAAVGSSAAASNPPTFGVTSSPSVPNPVGSGNSSAPSAAS. Low complexity predominate over residues 321–357; the sequence is SSSTAPLPVSATPSAATGTSQSGASSASAAQTAGASG. The interval 321–369 is disordered; that stretch reads SSSTAPLPVSATPSAATGTSQSGASSASAAQTAGASGHNVTSAPSAVPN.

As to quaternary structure, probable component of the nuclear pore complex (NPC).

The protein localises to the nucleus. It localises to the nuclear pore complex. The protein resides in the nucleus membrane. Required for the export of mRNAs containing poly(A) tails from the nucleus into the cytoplasm. The sequence is that of Nucleoporin NUP42 (NUP42) from Gallus gallus (Chicken).